The sequence spans 352 residues: Inhibin beta C chain (352 aa).

The signal sequence occupies residues 1 to 18 (MASSLLLALLFLTPTTVV). A propeptide spanning residues 19-236 (NPKTEGPCPA…VEGKHRVRRR (218 aa)) is cleaved from the precursor. Residues N111, N143, N161, and N173 are each glycosylated (N-linked (GlcNAc...) asparagine). Disulfide bonds link C240/C248, C247/C317, C276/C349, and C280/C351.

The protein belongs to the TGF-beta family. As to quaternary structure, homodimeric or heterodimeric through association with alpha and beta subunits, linked by one or more disulfide bonds. Inhibins are heterodimers of one alpha and one beta subunit. Activins are homo- or heterodimers of beta subunits only. As to expression, mainly expressed in the adult liver.

The protein localises to the secreted. In terms of biological role, inhibins and activins inhibit and activate, respectively, the secretion of follitropin by the pituitary gland. Inhibins/activins are involved in regulating a number of diverse functions such as hypothalamic and pituitary hormone secretion, gonadal hormone secretion, germ cell development and maturation, erythroid differentiation, insulin secretion, nerve cell survival, embryonic axial development or bone growth, depending on their subunit composition. Inhibins appear to oppose the functions of activins. The sequence is that of Inhibin beta C chain (Inhbc) from Mus musculus (Mouse).